Reading from the N-terminus, the 480-residue chain is Glycogen synthase (480 aa).

An ADP-alpha-D-glucose-binding site is contributed by K15.

The protein belongs to the glycosyltransferase 1 family. Bacterial/plant glycogen synthase subfamily.

It catalyses the reaction [(1-&gt;4)-alpha-D-glucosyl](n) + ADP-alpha-D-glucose = [(1-&gt;4)-alpha-D-glucosyl](n+1) + ADP + H(+). Its pathway is glycan biosynthesis; glycogen biosynthesis. In terms of biological role, synthesizes alpha-1,4-glucan chains using ADP-glucose. The protein is Glycogen synthase of Rhizobium leguminosarum bv. trifolii (strain WSM2304).